Here is a 687-residue protein sequence, read N- to C-terminus: Dictomallein (687 aa).

2 disordered regions span residues 1-45 (MGNG…SRRL) and 73-112 (TAGGAAPLTPAVASPAGPTGSTPGSTPGATTAPAPSSTSA). The Peptidase M66 domain occupies 233–501 (PVFGTDADVQ…QAWIASRVLA (269 aa)). His393 contacts Zn(2+). Residue Glu394 is part of the active site. His397 and His403 together coordinate Zn(2+).

Belongs to the dictomallein family. Requires Zn(2+) as cofactor.

The sequence is that of Dictomallein (dtmL) from Burkholderia mallei (strain NCTC 10247).